A 374-amino-acid chain; its full sequence is Chaperone protein DnaJ (374 aa).

The region spanning 4-68 (DYYEILGVSR…ETRNRYDRFG (65 aa)) is the J domain. The segment at 133 to 215 (GGEKEIRIRH…CGGSGRRQET (83 aa)) adopts a CR-type zinc-finger fold. Residues Cys146, Cys149, Cys163, Cys166, Cys189, Cys192, Cys203, and Cys206 each coordinate Zn(2+). 4 CXXCXGXG motif repeats span residues 146-153 (CQTCKGSG), 163-170 (CTTCSGTG), 189-196 (CPTCDGAG), and 203-210 (CDVCGGSG).

It belongs to the DnaJ family. As to quaternary structure, homodimer. Requires Zn(2+) as cofactor.

Its subcellular location is the cytoplasm. Functionally, participates actively in the response to hyperosmotic and heat shock by preventing the aggregation of stress-denatured proteins and by disaggregating proteins, also in an autonomous, DnaK-independent fashion. Unfolded proteins bind initially to DnaJ; upon interaction with the DnaJ-bound protein, DnaK hydrolyzes its bound ATP, resulting in the formation of a stable complex. GrpE releases ADP from DnaK; ATP binding to DnaK triggers the release of the substrate protein, thus completing the reaction cycle. Several rounds of ATP-dependent interactions between DnaJ, DnaK and GrpE are required for fully efficient folding. Also involved, together with DnaK and GrpE, in the DNA replication of plasmids through activation of initiation proteins. In Microcystis aeruginosa (strain NIES-843 / IAM M-2473), this protein is Chaperone protein DnaJ.